Here is a 262-residue protein sequence, read N- to C-terminus: Dihydroorotate dehydrogenase B (NAD(+)), electron transfer subunit (262 aa).

The FAD-binding FR-type domain maps to 2–102 (SKVFDAKVLA…MGPLGRGFTL (101 aa)). FAD is bound by residues 53 to 56 (RPIS), 70 to 72 (LFR), and 77 to 78 (GT). Positions 224, 229, 232, and 248 each coordinate [2Fe-2S] cluster.

The protein belongs to the PyrK family. In terms of assembly, heterotetramer of 2 PyrK and 2 PyrD type B subunits. However, the metal reductase complex seems to be composed of a heterooctamer of 4 PyrK and 4 PyrD subunits. Requires FAD as cofactor. [2Fe-2S] cluster is required as a cofactor.

The protein resides in the cytoplasm. It participates in pyrimidine metabolism; UMP biosynthesis via de novo pathway; orotate from (S)-dihydroorotate (NAD(+) route): step 1/1. Its function is as follows. Responsible for channeling the electrons from the oxidation of dihydroorotate from the FMN redox center in the PyrD type B subunit to the ultimate electron acceptor NAD(+). Together with PyrD, also forms a metal reductase complex able to reduce Fe(III)-chelates to Fe(II)-chelates, as well as soluble Cr(VI) and U(VI), using NADH as electron donor. To a lesser extent, can also use NADPH as an electron donor. Is unable to reduce riboflavin and FMN with NADH as electron donor. May have an in vivo role in metal reduction in D.reducens, which is an organism capable of reducing contaminant heavy metals and radionuclides. This is Dihydroorotate dehydrogenase B (NAD(+)), electron transfer subunit from Desulforamulus reducens (strain ATCC BAA-1160 / DSM 100696 / MI-1) (Desulfotomaculum reducens).